Reading from the N-terminus, the 475-residue chain is Ribulose bisphosphate carboxylase large chain (475 aa).

A propeptide spanning residues 1–2 is cleaved from the precursor; that stretch reads MS. Pro3 is subject to N-acetylproline. Lys14 bears the N6,N6,N6-trimethyllysine mark. Asn123 and Thr173 together coordinate substrate. The Proton acceptor role is filled by Lys175. Lys177 is a binding site for substrate. The Mg(2+) site is built by Lys201, Asp203, and Glu204. An N6-carboxylysine modification is found at Lys201. His294 acts as the Proton acceptor in catalysis. Positions 295, 327, and 379 each coordinate substrate.

It belongs to the RuBisCO large chain family. Type I subfamily. As to quaternary structure, heterohexadecamer of 8 large chains and 8 small chains; disulfide-linked. The disulfide link is formed within the large subunit homodimers. Mg(2+) serves as cofactor. In terms of processing, the disulfide bond which can form in the large chain dimeric partners within the hexadecamer appears to be associated with oxidative stress and protein turnover.

Its subcellular location is the plastid. It localises to the chloroplast. The enzyme catalyses 2 (2R)-3-phosphoglycerate + 2 H(+) = D-ribulose 1,5-bisphosphate + CO2 + H2O. The catalysed reaction is D-ribulose 1,5-bisphosphate + O2 = 2-phosphoglycolate + (2R)-3-phosphoglycerate + 2 H(+). In terms of biological role, ruBisCO catalyzes two reactions: the carboxylation of D-ribulose 1,5-bisphosphate, the primary event in carbon dioxide fixation, as well as the oxidative fragmentation of the pentose substrate in the photorespiration process. Both reactions occur simultaneously and in competition at the same active site. The polypeptide is Ribulose bisphosphate carboxylase large chain (Physcomitrium patens (Spreading-leaved earth moss)).